The primary structure comprises 220 residues: Large ribosomal subunit protein uL16 (220 aa).

The protein belongs to the universal ribosomal protein uL16 family. Component of the small ribosomal subunit. Mature ribosomes consist of a small (40S) and a large (60S) subunit. The 40S subunit contains about 33 different proteins and 1 molecule of RNA (18S). The 60S subunit contains about 49 different proteins and 3 molecules of RNA (25S, 5.8S and 5S).

The protein is Large ribosomal subunit protein uL16 (RPL10) of Zea mays (Maize).